We begin with the raw amino-acid sequence, 373 residues long: Mitochondrial nicotinamide adenine dinucleotide transporter 1 (373 aa).

Residues 1-80 lie on the Mitochondrial matrix side of the membrane; the sequence is MTQTDNPVPN…WVPLSSTQIT (80 aa). 3 Solcar repeats span residues 75 to 166, 174 to 263, and 276 to 364; these read SSTQ…SKKF, FDFV…LKVR, and INLQ…FRNR. The chain crosses the membrane as a helical span at residues 81–101; it reads ALSGAFAGFLSGVAVCPLDVA. Residues 102 to 141 are Mitochondrial intermembrane-facing; the sequence is KTRLQAQGLQTRFENPYYRGIMGTLSTIVRDEGPRGLYKG. The helical transmembrane segment at 142 to 162 threads the bilayer; the sequence is LVPIVLGYFPTWMIYFSVYEF. Residues 163-176 lie on the Mitochondrial matrix side of the membrane; it reads SKKFFHGIFPQFDF. A helical membrane pass occupies residues 177-199; that stretch reads VAQSCAAITAGAASTTLTNPIWV. Residues 200–235 are Mitochondrial intermembrane-facing; sequence VKTRLMLQSNLGEHPTHYKGTFDAFRKLFYQEGFKA. A helical transmembrane segment spans residues 236-256; that stretch reads LYAGLVPSLLGLFHVAIHFPI. Residues 257–280 are Mitochondrial matrix-facing; it reads YEDLKVRFHCYSRENNTNSINLQR. The chain crosses the membrane as a helical span at residues 281 to 297; that stretch reads LIMASSVSKMIASAVTY. At 298-335 the chain is on the mitochondrial intermembrane side; that stretch reads PHEILRTRMQLKSDIPDSIQRRLFPLIKATYAQEGLKG. Residues 336-358 form a helical membrane-spanning segment; the sequence is FYSGFTTNLVRTIPASAITLVSF. At 359 to 373 the chain is on the mitochondrial matrix side; sequence EYFRNRLENISTMVI.

The protein belongs to the mitochondrial carrier (TC 2.A.29) family.

It is found in the mitochondrion inner membrane. The catalysed reaction is dAMP(in) + NAD(+)(out) = dAMP(out) + NAD(+)(in). It catalyses the reaction dGMP(in) + NAD(+)(out) = dGMP(out) + NAD(+)(in). The enzyme catalyses GMP(in) + NAD(+)(out) = GMP(out) + NAD(+)(in). It carries out the reaction AMP(in) + NAD(+)(out) = AMP(out) + NAD(+)(in). The catalysed reaction is deamido-NAD(+)(in) + NAD(+)(out) = deamido-NAD(+)(out) + NAD(+)(in). In terms of biological role, mitochondrial inner membrane carrier protein that mediates the import of NAD(+) into mitochondria. Can transport NAD(+) by unidirectional transport or by exchange with intramitochondrially generated dAMP and dGMP. Also able to transport NAD(+) by exchange with AMP, GMP or deamido-NAD (+) in vitro. This chain is Mitochondrial nicotinamide adenine dinucleotide transporter 1 (YIA6), found in Saccharomyces cerevisiae (strain ATCC 204508 / S288c) (Baker's yeast).